The following is a 253-amino-acid chain: Kallikrein-7 (253 aa).

The N-terminal stretch at Met-1–Gly-22 is a signal peptide. A propeptide spans Glu-23–Lys-29 (activation peptide). The 221-residue stretch at Ile-30–Lys-250 folds into the Peptidase S1 domain. 6 disulfide bridges follow: Cys-36–Cys-165, Cys-55–Cys-71, Cys-137–Cys-239, Cys-144–Cys-211, Cys-176–Cys-190, and Cys-201–Cys-226. Catalysis depends on charge relay system residues His-70 and Asp-112. Residue Ser-205 is the Charge relay system of the active site. N-linked (GlcNAc...) asparagine glycosylation is present at Asn-246.

Belongs to the peptidase S1 family. Kallikrein subfamily. As to expression, abundantly expressed in the skin and is expressed by keratinocytes in the epidermis. Also expressed in the brain, mammary gland, cerebellum, spinal cord and kidney. Lower levels in salivary glands, uterus, thymus, thyroid, placenta, trachea and testis. Up-regulated in ovarian carcinoma, especially late-stage serous carcinoma, compared with normal ovaries and benign adenomas (at protein level).

The protein localises to the secreted. The enzyme catalyses Cleavage of proteins with aromatic side chains in the P1 position.. With respect to regulation, inhibited by Zn2+ and Cu2+ at low micromolar concentrations. Inhibited by SERPINA12. May catalyze the degradation of intercellular cohesive structures in the cornified layer of the skin in the continuous shedding of cells from the skin surface. Specific for amino acid residues with aromatic side chains in the P1 position. Cleaves insulin A chain at '14-Tyr-|-Gln-15' and insulin B chain at '6-Leu-|-Cys-7', '16-Tyr-|-Leu-17', '25-Phe-|-Tyr-26' and '26-Tyr-|-Thr-27'. Could play a role in the activation of precursors to inflammatory cytokines. The polypeptide is Kallikrein-7 (KLK7) (Homo sapiens (Human)).